The chain runs to 368 residues: MAANDRPDRSDRGADERLRATLAAIAPGTQMRDALERILRGNTGALIVLGYDKTVESICSGGFNLDVELSAPLMRELAKMDGAIILDEKATRIIKANVHLQPDPSIPTNESGTRHRSAERTARQTGFPVISVSQSMRIIALYVDGRRHVLDEPSAILSRANQALATLERYKLRLDEVSGTLSALEIEDLVTVRDAAVVAQRLEMVRRIADEIQGYVVELGTDGRLLSLQLDELLAGVEPERDLIVRDYLPAAAGKRGRSVDDVLRDLDALTPEELLDLGTVARVIGCGGTENLDNPVSPRGYRLLAKIPRLPCAVIERLVEHFGTLQKLLAASVDDLQAVEGVGESRARSVREGLSRLAESSILERYV.

The DAC domain occupies 15 to 153; sequence DERLRATLAA…DGRRHVLDEP (139 aa). ATP is bound by residues glycine 82, leucine 100, and 113–117; that span reads TRHRS. The tract at residues 101–121 is disordered; sequence QPDPSIPTNESGTRHRSAERT. Over residues 112 to 121 the composition is skewed to basic and acidic residues; sequence GTRHRSAERT.

The protein belongs to the DisA family. Homooctamer. It depends on Mg(2+) as a cofactor.

The catalysed reaction is 2 ATP = 3',3'-c-di-AMP + 2 diphosphate. In terms of biological role, participates in a DNA-damage check-point. DisA forms globular foci that rapidly scan along the chromosomes searching for lesions. Functionally, also has diadenylate cyclase activity, catalyzing the condensation of 2 ATP molecules into cyclic di-AMP (c-di-AMP). c-di-AMP likely acts as a signaling molecule that may couple DNA integrity with a cellular process. The chain is DNA integrity scanning protein DisA from Acidothermus cellulolyticus (strain ATCC 43068 / DSM 8971 / 11B).